The following is a 1229-amino-acid chain: Chitin synthase 4 (1229 aa).

Residues 1–196 are disordered; it reads MSLPERPGAK…IVKEGKRKEK (196 aa). Residues 1-202 are Cytoplasmic-facing; it reads MSLPERPGAK…RKEKIPEQLR (202 aa). The segment covering 18–27 has biased composition (basic residues); that stretch reads SYRKSPSRRN. Residues 43 to 66 are compositionally biased toward polar residues; it reads GQHQRGPSVNSFAETIRSPNSNIE. A compositionally biased stretch (basic and acidic residues) spans 92-105; sequence IRPERNRIDRDHPN. Residues 137–150 show a composition bias toward low complexity; it reads SGPPSGSNSASGSG. Basic and acidic residues-rich tracts occupy residues 164–177 and 187–196; these read SGRE…DNTR and IVKEGKRKEK. Residues 203–223 traverse the membrane as a helical segment; the sequence is PPSAWNVYCAVITFWSPDFIM. The Extracellular portion of the chain corresponds to 224 to 240; sequence KCCGMPAKAQRRAWREK. Residues 241–261 traverse the membrane as a helical segment; sequence IGLISLILIIMGVVGFLTFGF. The Cytoplasmic segment spans residues 262 to 495; the sequence is NQAVCGGPVL…IKVGTVDTDT (234 aa). A helical transmembrane segment spans residues 496–516; that stretch reads VGCIAAKVVLYVSLALILSVV. Topologically, residues 517–1054 are extracellular; that stretch reads GARFTLALIF…LCGTFCFSMQ (538 aa). 2 disordered regions span residues 539-589 and 601-648; these read TSQT…RSSF and GAER…DPYA. Residues 568–581 are compositionally biased toward low complexity; sequence GDVGSSVAGASSSD. 3 N-linked (GlcNAc...) asparagine glycosylation sites follow: Asn608, Asn635, and Asn1030. Polar residues predominate over residues 608–648; sequence NKSMPTTMASQASGGYMGPSSTAYRETNESRTSFLKSDPYA. A helical transmembrane segment spans residues 1055 to 1075; it reads FVIFIELIGTLVLPAAIAFTF. Residues 1076–1088 are Cytoplasmic-facing; that stretch reads YVVIISIINQPPQ. A helical membrane pass occupies residues 1089 to 1109; the sequence is IIPLVLLGLILGLPAILIIIT. Over 1110–1114 the chain is Extracellular; the sequence is AHSWS. Residues 1115-1135 form a helical membrane-spanning segment; sequence YVLWMLIYLLSLPVWNFVLPA. The Cytoplasmic segment spans residues 1136 to 1229; that stretch reads YAFWKFDDFS…QQYDEYYSDA (94 aa). The segment at 1210–1229 is disordered; sequence WASAPPHHHQQQYDEYYSDA.

It belongs to the chitin synthase family. Class IV subfamily.

Its subcellular location is the cell membrane. It catalyses the reaction [(1-&gt;4)-N-acetyl-beta-D-glucosaminyl](n) + UDP-N-acetyl-alpha-D-glucosamine = [(1-&gt;4)-N-acetyl-beta-D-glucosaminyl](n+1) + UDP + H(+). Functionally, polymerizes chitin, a structural polymer of the cell wall and septum, by transferring the sugar moiety of UDP-GlcNAc to the non-reducing end of the growing chitin polymer. Might function as a negative regulator on expression of other CHS genes. The chain is Chitin synthase 4 from Pyricularia oryzae (strain 70-15 / ATCC MYA-4617 / FGSC 8958) (Rice blast fungus).